Consider the following 642-residue polypeptide: Zinc finger protein 398 (642 aa).

Disordered regions lie at residues Met1–Pro24 and Glu198–Ser225. The KRAB domain occupies Val143–Ile214. Over residues Ala207–Glu220 the composition is skewed to acidic residues. Residue Lys265 forms a Glycyl lysine isopeptide (Lys-Gly) (interchain with G-Cter in SUMO2) linkage. Residues Phe343 to His364 form a C2H2-type 1; atypical zinc finger. The C2H2-type 2; degenerate zinc finger occupies Leu370–His392. 7 consecutive C2H2-type zinc fingers follow at residues Pro398–His420, Phe427–His449, Phe455–His477, Phe483–His505, Tyr511–His533, Phe539–His561, and Tyr567–His590. Residues Arg587–Leu615 form a disordered region.

This sequence belongs to the krueppel C2H2-type zinc-finger protein family.

The protein localises to the nucleus. Functionally, functions as a transcriptional activator. This chain is Zinc finger protein 398 (ZNF398), found in Homo sapiens (Human).